The following is a 373-amino-acid chain: Queuine tRNA-ribosyltransferase (373 aa).

Aspartate 89 (proton acceptor) is an active-site residue. Substrate-binding positions include aspartate 89–phenylalanine 93, aspartate 143, glutamine 185, and glycine 212. Residues glycine 243–aspartate 249 are RNA binding. The active-site Nucleophile is aspartate 262. An RNA binding; important for wobble base 34 recognition region spans residues threonine 267–arginine 271. Zn(2+)-binding residues include cysteine 300, cysteine 302, cysteine 305, and histidine 331.

The protein belongs to the queuine tRNA-ribosyltransferase family. As to quaternary structure, homodimer. Within each dimer, one monomer is responsible for RNA recognition and catalysis, while the other monomer binds to the replacement base PreQ1. Zn(2+) serves as cofactor.

It catalyses the reaction 7-aminomethyl-7-carbaguanine + guanosine(34) in tRNA = 7-aminomethyl-7-carbaguanosine(34) in tRNA + guanine. It participates in tRNA modification; tRNA-queuosine biosynthesis. Catalyzes the base-exchange of a guanine (G) residue with the queuine precursor 7-aminomethyl-7-deazaguanine (PreQ1) at position 34 (anticodon wobble position) in tRNAs with GU(N) anticodons (tRNA-Asp, -Asn, -His and -Tyr). Catalysis occurs through a double-displacement mechanism. The nucleophile active site attacks the C1' of nucleotide 34 to detach the guanine base from the RNA, forming a covalent enzyme-RNA intermediate. The proton acceptor active site deprotonates the incoming PreQ1, allowing a nucleophilic attack on the C1' of the ribose to form the product. After dissociation, two additional enzymatic reactions on the tRNA convert PreQ1 to queuine (Q), resulting in the hypermodified nucleoside queuosine (7-(((4,5-cis-dihydroxy-2-cyclopenten-1-yl)amino)methyl)-7-deazaguanosine). The polypeptide is Queuine tRNA-ribosyltransferase (Marinobacter nauticus (strain ATCC 700491 / DSM 11845 / VT8) (Marinobacter aquaeolei)).